A 307-amino-acid polypeptide reads, in one-letter code: Melanoma-associated antigen F1 (307 aa).

Residues 1–55 (MLQTPESRGLPVPQAEGEKDGGHDGETRAPTASQERPKEELGAGREEGAAEPALT) are disordered. Basic and acidic residues-rich tracts occupy residues 16–27 (EGEKDGGHDGET) and 35–48 (ERPK…REEG). Residues 76 to 277 (LNRTVAELVQ…HWPVQYREAL (202 aa)) enclose the MAGE domain.

In terms of assembly, interacts (via MAGE domain) with RING-type zinc finger-containing E3 ubiquitin-protein ligases LNX1, TRIM27 and NSMCE1; the interaction is direct. In terms of tissue distribution, ubiquitous.

Its function is as follows. Enhances ubiquitin ligase activity of RING-type zinc finger-containing E3 ubiquitin ligases. Proposed to act through recruitment and/or stabilization of the E2 ubiquitin-conjugating enzyme at the E3:substrate complex. MAGEF1-NSMCE1 ubiquitin ligase complex promotes proteasomal degradation of MMS19, a key component of the cytosolic iron-sulfur protein assembly (CIA) machinery. Down-regulation of MMS19 impairs the activity of several DNA repair and metabolism enzymes such as ERCC2/XPD, FANCJ, RTEL1 and POLD1 that require iron-sulfur clusters as cofactors. May negatively regulate genome integrity by inhibiting homologous recombination-mediated double-strand break DNA repair. This is Melanoma-associated antigen F1 from Homo sapiens (Human).